The following is a 320-amino-acid chain: Ferrochelatase (320 aa).

2 residues coordinate Fe cation: histidine 194 and glutamate 275.

It belongs to the ferrochelatase family. In terms of assembly, monomer.

The protein localises to the cytoplasm. The catalysed reaction is heme b + 2 H(+) = protoporphyrin IX + Fe(2+). It participates in porphyrin-containing compound metabolism; protoheme biosynthesis; protoheme from protoporphyrin-IX: step 1/1. Its function is as follows. Catalyzes the ferrous insertion into protoporphyrin IX. In Escherichia coli O8 (strain IAI1), this protein is Ferrochelatase.